The primary structure comprises 571 residues: L-erythrulose 1-kinase (571 aa).

The DhaK domain occupies 7–331; sequence SPDDFADEAV…WTAPVETPAY (325 aa). Catalysis depends on H217, which acts as the Tele-hemiaminal-histidine intermediate. One can recognise a DhaL domain in the interval 367–567; that stretch reads RNIVAVLETF…FAMLMKALGE (201 aa). ATP-binding positions include 396–402, 442–443, G484, R539, and 552–554; these read DGDHGQG, TS, and DPG.

The enzyme catalyses L-erythrulose + ATP = L-erythrulose 1-phosphate + ADP + H(+). The protein operates within carbohydrate metabolism; L-threitol degradation. Its function is as follows. Kinase that has a preference for L-erythrulose, producing L-erythrulose-1P. Involved in the degradation pathway of L-threitol, that allows M.smegmatis to grow on this compound as the sole carbon source. Is also able to phosphorylate D-erythrulose and dihydroxyacetone in vitro. This chain is L-erythrulose 1-kinase, found in Mycolicibacterium smegmatis (strain ATCC 700084 / mc(2)155) (Mycobacterium smegmatis).